The sequence spans 358 residues: Peptide chain release factor 1 (358 aa).

Q235 is subject to N5-methylglutamine. A disordered region spans residues 284 to 309 (KVESERSASRKSQVGSGDRSERIRTY).

It belongs to the prokaryotic/mitochondrial release factor family. Post-translationally, methylated by PrmC. Methylation increases the termination efficiency of RF1.

It is found in the cytoplasm. In terms of biological role, peptide chain release factor 1 directs the termination of translation in response to the peptide chain termination codons UAG and UAA. This is Peptide chain release factor 1 from Bartonella tribocorum (strain CIP 105476 / IBS 506).